The primary structure comprises 147 residues: uncharacterized protein (147 aa).

4Fe-4S ferredoxin-type domains follow at residues Trp-80–Gly-109 and Lys-110–Glu-141. [4Fe-4S] cluster contacts are provided by Cys-89, Cys-92, Cys-95, Cys-99, Cys-119, Cys-123, Cys-126, and Cys-130.

It depends on [4Fe-4S] cluster as a cofactor.

This is an uncharacterized protein from Methanocaldococcus jannaschii (strain ATCC 43067 / DSM 2661 / JAL-1 / JCM 10045 / NBRC 100440) (Methanococcus jannaschii).